The following is a 340-amino-acid chain: UDP-3-O-acylglucosamine N-acyltransferase (340 aa).

The Proton acceptor role is filled by histidine 247.

It belongs to the transferase hexapeptide repeat family. LpxD subfamily. In terms of assembly, homotrimer.

It carries out the reaction a UDP-3-O-[(3R)-3-hydroxyacyl]-alpha-D-glucosamine + a (3R)-hydroxyacyl-[ACP] = a UDP-2-N,3-O-bis[(3R)-3-hydroxyacyl]-alpha-D-glucosamine + holo-[ACP] + H(+). Its pathway is bacterial outer membrane biogenesis; LPS lipid A biosynthesis. Its function is as follows. Catalyzes the N-acylation of UDP-3-O-acylglucosamine using 3-hydroxyacyl-ACP as the acyl donor. Is involved in the biosynthesis of lipid A, a phosphorylated glycolipid that anchors the lipopolysaccharide to the outer membrane of the cell. This chain is UDP-3-O-acylglucosamine N-acyltransferase, found in Caulobacter sp. (strain K31).